The sequence spans 305 residues: MRLKVMMDVNKKTKIRHRNELNHTLAQLPLPAKRVMYMALAPIDSKEPLERGRVFKIRAEDLAALAKITPSLAYRQLKEGGKLLGASKISLRGDDIIALAKELNLPFTAKNSPEELDLNIIEWIAYSPDEGYLSLKFTRTIEPYISSLIGKKNKFTTQLLTASLRLSSQYSSSLYQLIRKHYSNFKKKNYFIISVDELKEELIAYTFDKDGNIEYKYPDFPIFKRDVLNKAIAEIKKKTEISFVGFTVHEKEGRKISKLKFEFVVDEDEFSGDKDDEAFFMNLSEADAAFLKVFDETVPPKKAKG.

It belongs to the initiator RepB protein family. As to quaternary structure, homodimer.

Its function is as follows. Initiation for plasmid R6K DNA replication. The chain is PI protein (pir) from Escherichia coli.